Here is a 63-residue protein sequence, read N- to C-terminus: Small ribosomal subunit protein eS17 (63 aa).

It belongs to the eukaryotic ribosomal protein eS17 family.

This chain is Small ribosomal subunit protein eS17, found in Methanococcus maripaludis (strain DSM 14266 / JCM 13030 / NBRC 101832 / S2 / LL).